The chain runs to 227 residues: MGGKQSTAARSRGPFPGVSTDDSAVPPPGGAPHFGHYRTGGGAMGLRSRSVSSVAGMGMDPSTAGGVPFGLYTPASRGTGDSERAPGGGGSASDSTYAHGNGYQETGGGHHRDGMLYLGSRASLADALPLHIAPRWFSSHSGFKCPICSKSVASDEMEMHFIMCLSKPRLSYNDDVLTKDAGECVICLEELLQGDTIARLPCLCIYHKSCIDSWFEVNRSCPEHPAD.

The disordered stretch occupies residues 1-42 (MGGKQSTAARSRGPFPGVSTDDSAVPPPGGAPHFGHYRTGGG). Residue Gly-2 is the site of N-myristoyl glycine attachment. Residues 2-10 (GGKQSTAAR) form a required for endosomal and lysosomal localization and myristoylation region. Ser-50, Ser-52, and Ser-53 each carry phosphoserine. Positions 68–105 (PFGLYTPASRGTGDSERAPGGGGSASDSTYAHGNGYQE) are disordered. Tyr-103 carries the post-translational modification Phosphotyrosine; by SRC. Ser-123 carries the phosphoserine modification. The segment at 184 to 225 (CVICLEELLQGDTIARLPCLCIYHKSCIDSWFEVNRSCPEHP) adopts an RING-type; atypical zinc-finger fold.

As to quaternary structure, interacts with AKT1, GLUL and TUBB2A. Interacts with ZNRF2. Interacts (via its RING domain) with UBE2N. Interacts (when phosphorylated) with YWHAE. Post-translationally, N-myristoylation targets ZNRF1 to intracellular membranes. Phosphorylated by SRC at Tyr-103; leading to 'Lys-63'-linked ubiquitination of TLR3, lysosomal trafficking and degradation. Expressed primarily in the nervous system, with expression higher in developing brain relative to adult. Expressed at low levels in testis and thymus.

It localises to the endosome. The protein resides in the lysosome. Its subcellular location is the membrane. The protein localises to the cytoplasmic vesicle. It is found in the secretory vesicle. It localises to the synaptic vesicle membrane. The enzyme catalyses S-ubiquitinyl-[E2 ubiquitin-conjugating enzyme]-L-cysteine + [acceptor protein]-L-lysine = [E2 ubiquitin-conjugating enzyme]-L-cysteine + N(6)-ubiquitinyl-[acceptor protein]-L-lysine.. It functions in the pathway protein modification; protein ubiquitination. Functionally, E3 ubiquitin-protein ligase that plays a role in different processes including cell differentiation, receptor recycling or regulation of inflammation. Mediates the ubiquitination of AKT1 and GLUL, thereby playing a role in neuron cells differentiation. Plays a role in the establishment and maintenance of neuronal transmission and plasticity. Regulates Schwann cells differentiation by mediating ubiquitination of GLUL. Promotes neurodegeneration by mediating 'Lys-48'-linked polyubiquitination and subsequent degradation of AKT1 in axons: degradation of AKT1 prevents AKT1-mediated phosphorylation of GSK3B, leading to GSK3B activation and phosphorylation of DPYSL2/CRMP2 followed by destabilization of microtubule assembly in axons. Ubiquitinates the Na(+)/K(+) ATPase alpha-1 subunit/ATP1A1 and thereby influences its endocytosis and/or degradation. Controls ligand-induced EGFR signaling via mediating receptor ubiquitination and recruitment of the ESCRT machinery. Acts as a negative feedback mechanism controlling TLR3 trafficking by mediating TLR3 'Lys-63'-linked polyubiquitination to reduce type I IFN production. Modulates inflammation by promoting caveolin-1/CAV1 ubiquitination and degradation to regulate TLR4-activated immune response. The chain is E3 ubiquitin-protein ligase ZNRF1 (ZNRF1) from Homo sapiens (Human).